Reading from the N-terminus, the 667-residue chain is Long-chain-fatty-acid--CoA ligase ACSBG2 (667 aa).

ATP contacts are provided by residues 227-235 (TSGTTGTPK), 418-423 (EIYGMS), Asp-496, Arg-511, and Arg-624.

This sequence belongs to the ATP-dependent AMP-binding enzyme family. Bubblegum subfamily. As to expression, testis- and brainstem-specific. Expressed in pubertal and adult testis. Enriched in germ cells and Sertoli cells while present at a lower level in Leydig cells. Present in testicular Sertoli cells and large motoneurons in the medulla oblongata and cervical spinal cord (at protein level).

It localises to the cytoplasm. Its subcellular location is the membrane. It carries out the reaction a long-chain fatty acid + ATP + CoA = a long-chain fatty acyl-CoA + AMP + diphosphate. It catalyses the reaction (5Z,8Z,11Z,14Z)-eicosatetraenoate + ATP + CoA = (5Z,8Z,11Z,14Z)-eicosatetraenoyl-CoA + AMP + diphosphate. The enzyme catalyses hexadecanoate + ATP + CoA = hexadecanoyl-CoA + AMP + diphosphate. The catalysed reaction is (9Z)-octadecenoate + ATP + CoA = (9Z)-octadecenoyl-CoA + AMP + diphosphate. It carries out the reaction (9Z,12Z)-octadecadienoate + ATP + CoA = (9Z,12Z)-octadecadienoyl-CoA + AMP + diphosphate. It catalyses the reaction tetracosanoate + ATP + CoA = tetracosanoyl-CoA + AMP + diphosphate. In terms of biological role, catalyzes the conversion of fatty acids such as long chain and very long-chain fatty acids to their active form acyl-CoAs for both synthesis of cellular lipids, and degradation via beta-oxidation. Can activate diverse saturated, monosaturated and polyunsaturated fatty acids. Has increased ability to activate oleic and linoleic acid. May play a role in spermatogenesis. The polypeptide is Long-chain-fatty-acid--CoA ligase ACSBG2 (Mus musculus (Mouse)).